Consider the following 158-residue polypeptide: Cytochrome c-type biogenesis protein CcmE (158 aa).

At 1-7 the chain is on the cytoplasmic side; it reads MKPRHRR. The chain crosses the membrane as a helical; Signal-anchor for type II membrane protein span at residues 8 to 28; it reads LTLIALVLGGLGLSAGLALTA. Residues 29–158 lie on the Periplasmic side of the membrane; that stretch reads FQDNLVFFFT…DGHPETTTAY (130 aa). Residues His123 and Tyr127 each coordinate heme. The disordered stretch occupies residues 138–158; that stretch reads RIGQGNGTPGPDGHPETTTAY.

This sequence belongs to the CcmE/CycJ family.

It localises to the cell inner membrane. Its function is as follows. Heme chaperone required for the biogenesis of c-type cytochromes. Transiently binds heme delivered by CcmC and transfers the heme to apo-cytochromes in a process facilitated by CcmF and CcmH. The chain is Cytochrome c-type biogenesis protein CcmE from Alkalilimnicola ehrlichii (strain ATCC BAA-1101 / DSM 17681 / MLHE-1).